The chain runs to 584 residues: MSAKSFEVTDPVNSSLKGFALANPSITLVPEEKILFRKTDSDKIALISGGGSGHEPTHAGFIGKGMLSGAVVGEIFASPSTKQILNAIRLVNENASGVLLIVKNYTGDVLHFGLSAERARALGINCRVAVIGDDVAVGREKGGMVGRRALAGTVLVHKIVGAFAEEYSSKYGLDGTAKVAKIINDNLVTIGSSLDHCKVPGRKFESELNEKQMELGMGIHNEPGVKVLDPIPSTEDLISKYMLPKLLDPNDKDRAFVKFDEDDEVVLLVNNLGGVSNFVISSITSKTTDFLKENYNITPVQTIAGTLMTSFNGNGFSITLLNATKATKALQSDFEEIKSVLDLLNAFTNAPGWPIADFEKTSAPSVNDDLLHNEVTAKAVGTYDFDKFAEWMKSGAEQVIKSEPHITELDNQVGDGDCGYTLVAGVKGITENLDKLSKDSLSQAVAQISDFIEGSMGGTSGGLYSILLSGFSHGLIQVCKSKDEPVTKEIVAKSLGIALDTLYKYTKARKGSSTMIDALEPFVKEFTASKDFNKAVKAAEEGAKSTATFEAKFGRASYVGDSSQVEDPGAVGLCEFLKGVQSAL.

N-acetylserine is present on Ser2. 2 positions are modified to phosphoserine: Ser2 and Ser5. A DhaK domain is found at 7–353 (EVTDPVNSSL…LNAFTNAPGW (347 aa)). Residues 51 to 54 (GSGH), Lys103, and Asp108 contribute to the substrate site. His220 (tele-hemiaminal-histidine intermediate) is an active-site residue. Ser365 carries the phosphoserine modification. Residues 386-582 (DKFAEWMKSG…LCEFLKGVQS (197 aa)) form the DhaL domain. Residues 415-418 (DGDC) and 459-460 (TS) contribute to the ATP site. Ser512 is subject to Phosphoserine. Residues 514 to 515 (TM) and 567 to 569 (DPG) each bind ATP.

This sequence belongs to the dihydroxyacetone kinase (DAK) family.

The enzyme catalyses dihydroxyacetone + ATP = dihydroxyacetone phosphate + ADP + H(+). It carries out the reaction D-glyceraldehyde + ATP = D-glyceraldehyde 3-phosphate + ADP + H(+). It functions in the pathway polyol metabolism; glycerol fermentation; glycerone phosphate from glycerol (oxidative route): step 2/2. Its function is as follows. Catalyzes both the phosphorylation of dihydroxyacetone and of glyceraldehyde. This is Dihydroxyacetone kinase 1 (DAK1) from Saccharomyces cerevisiae (strain ATCC 204508 / S288c) (Baker's yeast).